Consider the following 336-residue polypeptide: MKIAIVNDMPMAIEALRRALAFEPAHQVIWVAANGADAVQRSIEQTPDLILMDLIMPVMDGVEATRRIMAETPCAIVIVTVDREQNMRRVFEAMGHGALDVVDTPAIGGPNPREAAAPLLRKILNIDWLMGQRVGRERVVTTSRSEVSRRDRLVAIGSSAGGPAALEILLKGLPENFPAAIVLVQHVDQVFAAGMAEWLCSASGMPVRLAKEGETPQVGVVLLAGTNHHIRLLKDGTLAYTAEPVNEVYRPSIDVFFESVTRYWTGEAVGVLLTGMGRDGAQGLKAMRERGFLTIAQDQASSAVYGMPKAAAAIDAAVEIRPLHTIAPRLMEVFTQ.

The 118-residue stretch at 2–119 folds into the Response regulatory domain; that stretch reads KIAIVNDMPM…PNPREAAAPL (118 aa). At Asp-53 the chain carries 4-aspartylphosphate. Residues 147-336 enclose the CheB-type methylesterase domain; the sequence is VSRRDRLVAI…APRLMEVFTQ (190 aa). Active-site residues include Ser-159, His-186, and Asp-279.

This sequence belongs to the CheB family. Phosphorylated by CheA. Phosphorylation of the N-terminal regulatory domain activates the methylesterase activity.

Its subcellular location is the cytoplasm. The enzyme catalyses [protein]-L-glutamate 5-O-methyl ester + H2O = L-glutamyl-[protein] + methanol + H(+). It carries out the reaction L-glutaminyl-[protein] + H2O = L-glutamyl-[protein] + NH4(+). Functionally, involved in chemotaxis. Part of a chemotaxis signal transduction system that modulates chemotaxis in response to various stimuli. Catalyzes the demethylation of specific methylglutamate residues introduced into the chemoreceptors (methyl-accepting chemotaxis proteins or MCP) by CheR. Also mediates the irreversible deamidation of specific glutamine residues to glutamic acid. The polypeptide is Protein-glutamate methylesterase/protein-glutamine glutaminase 3 (Pseudomonas syringae pv. tomato (strain ATCC BAA-871 / DC3000)).